A 1429-amino-acid polypeptide reads, in one-letter code: Nitric oxide synthase 1 (1429 aa).

Residues 1-200 (MEEHTFGVQQ…LQDSGEQDEL (200 aa)) form an interaction with NOSIP region. Residues 17 to 99 (SVRLFKRKVG…ETHVVLILRG (83 aa)) form the PDZ domain. Disordered stretches follow at residues 114 to 174 (DGTP…SVSQ) and 271 to 298 (NNPY…SRCP). Residues 163 to 240 (QGRGQGAGSV…TGIQVDRDLD (78 aa)) form an interaction with DYNLL1/PIN region. A compositionally biased stretch (polar residues) spans 272–294 (NPYSENEQSPASGKQSPTKNGSP). The residue at position 280 (S280) is a Phosphoserine. S334 is a (6R)-L-erythro-5,6,7,8-tetrahydrobiopterin binding site. C415 contributes to the heme b binding site. L-arginine contacts are provided by Q478, W587, Y588, and E592. V677, W678, and F691 together coordinate (6R)-L-erythro-5,6,7,8-tetrahydrobiopterin. Y706 is a binding site for heme b. Residues 725 to 745 (KRRAIGFKKLAEAVKFSAKLM) are calmodulin-binding. The Flavodoxin-like domain occupies 755–935 (ATILYATETG…AFRTWAKKVF (181 aa)). 8 residues coordinate FMN: T761, E762, T763, K765, S766, S807, T808, and G812. Phosphoserine occurs at positions 847, 857, and 858. S886, H891, C893, E919, and Q923 together coordinate FMN. One can recognise an FAD-binding FR-type domain in the interval 990–1237 (KRVSAARLLS…VRGAPSFHLP (248 aa)). R1010 is an NADP(+) binding site. The FAD site is built by H1032, R1173, Y1174, Y1175, S1176, T1191, and A1193. S1196 serves as a coordination point for NADP(+). Residues Y1197, V1210, C1211, and S1212 each coordinate FAD. Residues T1251, R1284, S1313, R1314, K1320, Y1322, Q1324, D1357, T1398, and R1400 each contribute to the NADP(+) site.

It belongs to the NOS family. As to quaternary structure, homodimer. Interacts with DLG4; the interaction possibly being prevented by the association between NOS1 and CAPON. Forms a ternary complex with CAPON and RASD1. Forms a ternary complex with CAPON and SYN1. Interacts with ZDHHC23. Interacts with NOSIP; which may impair its synaptic location. Interacts with HTR4. Interacts with VAC14. Interacts (via N-terminal domain) with DLG4 (via N-terminal tandem pair of PDZ domains). Interacts with SLC6A4. Forms a complex with ASL, ASS1 and SLC7A1; the complex regulates cell-autonomous L-arginine synthesis and citrulline recycling while channeling extracellular L-arginine to nitric oxide synthesis pathway. Interacts with DMD; localizes NOS1 to sarcolemma in muscle cells. Interacts with DYNLL1; inhibits the nitric oxide synthase activity. It depends on heme b as a cofactor. The cofactor is FAD. FMN is required as a cofactor. (6R)-L-erythro-5,6,7,8-tetrahydrobiopterin serves as cofactor. In terms of processing, ubiquitinated; mediated by STUB1/CHIP in the presence of Hsp70 and Hsp40 (in vitro). In terms of tissue distribution, widely expressed in the nervous system: expressed in cerebrum, olfactory bulb, hippocampus, midbrain, cerebellum, pons, medulla oblongata, and spinal cord. Also found in skeletal muscle, where it is localized beneath the sarcolemma of fast twitch muscle fibers, and in spleen, heart, kidney, and liver. N-NOS-1 and N-NOS-2 are found in all parts of the nervous system. NNOS beta and gamma occur in a region-specific manner in the brain and NNOS beta expression is developmentally regulated. NNOS Mu is only found in mature skeletal and cardiac muscles.

Its subcellular location is the cell membrane. The protein resides in the sarcolemma. The protein localises to the cell projection. It localises to the dendritic spine. The catalysed reaction is 2 L-arginine + 3 NADPH + 4 O2 + H(+) = 2 L-citrulline + 2 nitric oxide + 3 NADP(+) + 4 H2O. Stimulated by calcium/calmodulin. Inhibited by DYNLL1 that prevents the dimerization of the protein. Inhibited by NOSIP. Produces nitric oxide (NO) which is a messenger molecule with diverse functions throughout the body. In the brain and peripheral nervous system, NO displays many properties of a neurotransmitter. Probably has nitrosylase activity and mediates cysteine S-nitrosylation of cytoplasmic target proteins such SRR. Isoform NNOS Mu may be an effector enzyme for the dystrophin complex. The sequence is that of Nitric oxide synthase 1 from Mus musculus (Mouse).